A 133-amino-acid polypeptide reads, in one-letter code: Hemiptericin (133 aa).

In terms of biological role, antibacterial peptide. Affects Gram-negative bacteria. This is Hemiptericin from Pyrrhocoris apterus (Sap sucking bug).